The sequence spans 156 residues: Myosin regulatory light chain, striated adductor muscle (156 aa).

Alanine 1 bears the Blocked amino end (Ala) mark. 2 consecutive EF-hand domains span residues 15–50 (KQIQ…LGRT) and 84–119 (DTEE…MGDN). Positions 28, 30, 32, and 39 each coordinate Ca(2+).

In molluscan muscle, calcium regulation is associated with myosin rather than with actin. Muscle myosin contains two types of light chains: the catalytic light chain, essential for ATPase activity, and the regulatory light chain, a calcium-binding protein responsible for Ca(2+) dependent binding and Ca(2+) dependent Mg-ATPase activity. The chain is Myosin regulatory light chain, striated adductor muscle from Mizuhopecten yessoensis (Japanese scallop).